Here is a 296-residue protein sequence, read N- to C-terminus: Cytidine deaminase (296 aa).

2 consecutive CMP/dCMP-type deaminase domains span residues 47–167 and 186–296; these read TEAE…FGPK and DSAD…IDPV. Residue 88 to 90 participates in substrate binding; that stretch reads NLE. A Zn(2+)-binding site is contributed by histidine 101. The active-site Proton donor is glutamate 103. The Zn(2+) site is built by cysteine 128 and cysteine 131.

It belongs to the cytidine and deoxycytidylate deaminase family. Homodimer. Zn(2+) serves as cofactor.

The enzyme catalyses cytidine + H2O + H(+) = uridine + NH4(+). It carries out the reaction 2'-deoxycytidine + H2O + H(+) = 2'-deoxyuridine + NH4(+). In terms of biological role, this enzyme scavenges exogenous and endogenous cytidine and 2'-deoxycytidine for UMP synthesis. This chain is Cytidine deaminase, found in Shewanella baltica (strain OS155 / ATCC BAA-1091).